We begin with the raw amino-acid sequence, 67 residues long: MRVFKVTACVPSQTRIRTQRELQNTYFTKLVPYDNWFREQQRIMKMGGKIVKVELATGKPGTNTGLL.

The CpcD-like domain maps to 1–56 (MRVFKVTACVPSQTRIRTQRELQNTYFTKLVPYDNWFREQQRIMKMGGKIVKVELA).

It belongs to the phycobilisome linker protein family.

The protein localises to the cellular thylakoid membrane. Its function is as follows. Rod linker protein, associated with allophycocyanin. Linker polypeptides determine the state of aggregation and the location of the disk-shaped phycobiliprotein units within the phycobilisome and modulate their spectroscopic properties in order to mediate a directed and optimal energy transfer. The sequence is that of Phycobilisome 7.8 kDa linker polypeptide, allophycocyanin-associated, core (apcC) from Arthrospira platensis (Spirulina platensis).